Consider the following 361-residue polypeptide: Core-capsid bridging protein (361 aa).

Over residues 311–321 the composition is skewed to basic residues; that stretch reads RRRRVARRSKS. Positions 311-331 are disordered; it reads RRRRVARRSKSTGRFVAAPRK.

Belongs to the adenoviridae core-capsid bridging protein family. In terms of assembly, monomer. Homodimer. Exists in equilibrium between monomers and dimers in solution. Interacts with the histone-like nucleoprotein; this interactions bridge the virus core to the capsid. Interacts with core protein X; this interactions bridge the virus core to the capsid. Interacts with the endosome lysis protein VI; this interactions bridge the virus core to the capsid. Interacts with the peripentonal hexons. Interacts with host NPM1; this interaction might play a role in virus assembly.

Its subcellular location is the virion. The protein resides in the host nucleus. It is found in the host nucleolus. Associates loosely with the viral DNA to form an outer shell around the nucleoprotein-DNA complex and links it with the capsid by binding the endosome lysis protein. Dissociates from the viral genome during entry. Might be involved in nuclear capsid assembly of the viral particles through its association with NPM1/nucleophosmin. This chain is Core-capsid bridging protein, found in Bovine adenovirus 2 (BAdV-2).